Reading from the N-terminus, the 23-residue chain is Aldehyde dehydrogenase (23 aa).

It belongs to the aldehyde dehydrogenase family.

It catalyses the reaction an aldehyde + NAD(+) + H2O = a carboxylate + NADH + 2 H(+). This chain is Aldehyde dehydrogenase, found in Moraxella sp. (strain TAE123).